The sequence spans 450 residues: tRNA modification GTPase MnmE (450 aa).

Arginine 23, glutamate 79, and lysine 118 together coordinate (6S)-5-formyl-5,6,7,8-tetrahydrofolate. The TrmE-type G domain occupies 214-374 (GITLILVGKP…LKDHILAKVG (161 aa)). Asparagine 224 serves as a coordination point for K(+). Residues 224–229 (NAGKSS), 243–249 (TSIAGTT), and 268–271 (DTAG) each bind GTP. Serine 228 provides a ligand contact to Mg(2+). Residues threonine 243, isoleucine 245, and threonine 248 each coordinate K(+). Threonine 249 is a binding site for Mg(2+). Lysine 450 lines the (6S)-5-formyl-5,6,7,8-tetrahydrofolate pocket.

It belongs to the TRAFAC class TrmE-Era-EngA-EngB-Septin-like GTPase superfamily. TrmE GTPase family. Homodimer. Heterotetramer of two MnmE and two MnmG subunits. K(+) serves as cofactor.

The protein localises to the cytoplasm. Its function is as follows. Exhibits a very high intrinsic GTPase hydrolysis rate. Involved in the addition of a carboxymethylaminomethyl (cmnm) group at the wobble position (U34) of certain tRNAs, forming tRNA-cmnm(5)s(2)U34. The polypeptide is tRNA modification GTPase MnmE (Francisella philomiragia subsp. philomiragia (strain ATCC 25017 / CCUG 19701 / FSC 153 / O#319-036)).